A 963-amino-acid chain; its full sequence is Ubiquitin carboxyl-terminal hydrolase 4 (963 aa).

Residues 11–122 (PDAETQKSEL…GQQPIVRKVV (112 aa)) enclose the DUSP domain. The tract at residues 27–216 (TLQRGAQWYL…LYQGQVLVIE (190 aa)) is necessary for interaction with SART3. The short motif at 133-141 (VEVYLLELK) is the Nuclear export signal element. Positions 142 to 226 (LCENSDPTNV…PQNEDGTWPR (85 aa)) constitute a Ubiquitin-like 1 domain. Residues 219 to 277 (NEDGTWPRQTQQSKSSTAPSRNFTTSPKSSASPYSSVSASPIANGDSTNTSGMHSSGVS) form a disordered region. A compositionally biased stretch (polar residues) spans 225-243 (PRQTQQSKSSTAPSRNFTT). A required for USP4 activation by providing conformational flexibility between the DUSP and catalytic domains region spans residues 229–295 (QQSKSSTAPS…SYNCQESPLT (67 aa)). Residues 244 to 261 (SPKSSASPYSSVSASPIA) show a composition bias toward low complexity. A USP domain is found at 302–923 (CGLGNLGNTC…AAYVLFYQRR (622 aa)). Cysteine 311 acts as the Nucleophile in catalysis. The regulates ubiquitin dissociation stretch occupies residues 384–386 (PQF). The interval 405 to 407 (LHE) is necessary for interaction with RBL2. Serine 445 bears the Phosphoserine mark. The necessary for interaction with RB1 and RBL2 stretch occupies residues 459 to 463 (LVCPE). Zn(2+)-binding residues include cysteine 461 and cysteine 464. A Ubiquitin-like 2 domain is found at 483–571 (LKKDRVMEIF…IFVYEVCSTS (89 aa)). The segment at 485-775 (KDRVMEIFLV…LQPQKKKKTA (291 aa)) is interacts with DUSP and ubiquitin-like 1 domains and is required for USP4 activation. Residues 634 to 701 (PLPDESGSSP…ATQKKNKGRP (68 aa)) are disordered. Residues serine 675 and serine 680 each carry the phosphoserine modification. The short motif at 767–772 (QPQKKK) is the Nuclear localization signal element. Zn(2+) is bound by residues cysteine 799 and cysteine 802. Histidine 881 serves as the catalytic Proton acceptor. Residues 930–963 (TPSLSFPGSSDGGARPSSSQQGTGDDETYSMDTN) form a disordered region. Acidic residues predominate over residues 953–963 (GDDETYSMDTN).

This sequence belongs to the peptidase C19 family. USP4 subfamily. In terms of assembly, interacts with RB1 (both dephosphorylated and hypophosphorylated forms). Interacts with RBL1 and RBL2. Interacts with ADORA2A (via cytoplasmic C-terminus); the interaction is direct. Interacts with SART3; recruits USP4 to its substrate PRPF3. Post-translationally, phosphorylated at Ser-445 by PKB/AKT1 in response to EGF stimulus, promoting its ability deubiquitinate RHEB. In terms of processing, monoubiquitinated by TRIM21. Ubiquitination does not lead to its proteasomal degradation. Autodeubiquitinated.

Its subcellular location is the cytoplasm. It localises to the nucleus. It catalyses the reaction Thiol-dependent hydrolysis of ester, thioester, amide, peptide and isopeptide bonds formed by the C-terminal Gly of ubiquitin (a 76-residue protein attached to proteins as an intracellular targeting signal).. With respect to regulation, the completion of the deubiquitinase reaction is mediated by the DUSP and ubiquitin-like 1 domains which promotes the release of ubiquitin from the catalytic site enabling subsequent reactions to occur. Functionally, deubiquitinating enzyme that removes conjugated ubiquitin from target proteins. Deubiquitinates PDPK1. Deubiquitinates TRIM21. Deubiquitinates receptor ADORA2A which increases the amount of functional receptor at the cell surface. Deubiquitinates HAS2. Deubiquitinates RHEB in response to EGF signaling, promoting mTORC1 signaling. May regulate mRNA splicing through deubiquitination of the U4 spliceosomal protein PRPF3. This may prevent its recognition by the U5 component PRPF8 thereby destabilizing interactions within the U4/U6.U5 snRNP. May also play a role in the regulation of quality control in the ER. The sequence is that of Ubiquitin carboxyl-terminal hydrolase 4 (USP4) from Bos taurus (Bovine).